Consider the following 256-residue polypeptide: Probable cyclic nucleotide phosphodiesterase Fisuc_1441/FSU_1912 (256 aa).

Residues Asp20, His22, Asp59, Asn89, His156, His196, and His198 each contribute to the Fe cation site. Residues His22, Asp59, and 89-90 (NH) contribute to the AMP site. An AMP-binding site is contributed by His198.

This sequence belongs to the cyclic nucleotide phosphodiesterase class-III family. The cofactor is Fe(2+).

The sequence is that of Probable cyclic nucleotide phosphodiesterase Fisuc_1441/FSU_1912 from Fibrobacter succinogenes (strain ATCC 19169 / S85).